The primary structure comprises 548 residues: Phosphoglucomutase (548 aa).

The active-site Phosphoserine intermediate is the S135. Mg(2+) contacts are provided by S135, D288, D290, and D292.

It belongs to the phosphohexose mutase family. Mg(2+) serves as cofactor.

The enzyme catalyses alpha-D-glucose 1-phosphate = alpha-D-glucose 6-phosphate. It participates in glycolipid metabolism; diglucosyl-diacylglycerol biosynthesis. In terms of biological role, catalyzes the interconversion between glucose-6-phosphate and alpha-glucose-1-phosphate. This is the first step in the biosynthesis of diglucosyl-diacylglycerol (Glc2-DAG), i.e. a glycolipid found in the membrane, which is also used as a membrane anchor for lipoteichoic acid (LTA). This Staphylococcus haemolyticus (strain JCSC1435) protein is Phosphoglucomutase (pgcA).